The primary structure comprises 180 residues: CASP-like protein 2A3 (180 aa).

The Cytoplasmic segment spans residues 1–13 (MELIYGSTMRKKW). Residues 14-34 (IEPALRFLPVGLCISALALML) form a helical membrane-spanning segment. Topologically, residues 35 to 55 (KSKEGNENGILEYKHVGAFRY) are extracellular. The chain crosses the membrane as a helical span at residues 56–76 (LAYANGICAAYSVLSTFNSVV). Residues 77–85 (PRSCSLSRA) lie on the Cytoplasmic side of the membrane. The chain crosses the membrane as a helical span at residues 86-106 (WFVFVFDQAFTYLMLGAGAVV). The Extracellular portion of the chain corresponds to 107–135 (TEVLYLAYKGDEKITWFEICPYYGRFCNR). A helical membrane pass occupies residues 136-156 (VAASLVISFLALLCFIPLSLI). Residues 157–180 (SAYRVFSKYDPPSLCKKDQITSQS) are Cytoplasmic-facing.

The protein belongs to the Casparian strip membrane proteins (CASP) family. In terms of assembly, homodimer and heterodimers.

Its subcellular location is the cell membrane. In Picea sitchensis (Sitka spruce), this protein is CASP-like protein 2A3.